Consider the following 301-residue polypeptide: Very-long-chain aldehyde decarbonylase GL1-10 (301 aa).

Helical transmembrane passes span 36–56 (VLFWHNILFLFVVFTLAPLPV), 94–114 (FFLVIGPLQLVSYPTVKMVGI), and 187–207 (SFVGPALAPGHMITFWLWIVL). The 135-residue stretch at 131 to 265 (LVYFLVEDYL…FTYCDYLYGT (135 aa)) folds into the Fatty acid hydroxylase domain.

The protein belongs to the sterol desaturase family. Homodimer. As to expression, expressed ubiquitously.

The protein resides in the endoplasmic reticulum membrane. The catalysed reaction is a long-chain fatty aldehyde + 2 NADPH + O2 + H(+) = a long-chain alkane + formate + 2 NADP(+) + H2O. Functionally, aldehyde decarbonylase involved in the conversion of aldehydes to alkanes. Core component of a very-long-chain alkane synthesis complex. This chain is Very-long-chain aldehyde decarbonylase GL1-10, found in Oryza sativa subsp. japonica (Rice).